The primary structure comprises 86 residues: Large ribosomal subunit protein eL43 (86 aa).

Zn(2+) contacts are provided by Cys-40, Cys-43, Cys-58, and Cys-61. The C4-type zinc finger occupies 40–61; sequence CPFCRSKAVIREAYGIYRCKKC.

Belongs to the eukaryotic ribosomal protein eL43 family. Putative zinc-binding subfamily. In terms of assembly, part of the 50S ribosomal subunit. Zn(2+) serves as cofactor.

In terms of biological role, binds to the 23S rRNA. This is Large ribosomal subunit protein eL43 from Nanoarchaeum equitans (strain Kin4-M).